We begin with the raw amino-acid sequence, 183 residues long: Integrase-like protein y4lS (183 aa).

Positions 2 to 136 constitute a Resolvase/invertase-type recombinase catalytic domain; it reads ARIGYARTFT…EGIAAARKRG (135 aa).

This sequence belongs to the site-specific recombinase resolvase family.

This chain is Integrase-like protein y4lS, found in Sinorhizobium fredii (strain NBRC 101917 / NGR234).